We begin with the raw amino-acid sequence, 76 residues long: Small ribosomal subunit protein bS18 (76 aa).

Belongs to the bacterial ribosomal protein bS18 family. In terms of assembly, part of the 30S ribosomal subunit. Forms a tight heterodimer with protein bS6.

Its function is as follows. Binds as a heterodimer with protein bS6 to the central domain of the 16S rRNA, where it helps stabilize the platform of the 30S subunit. The polypeptide is Small ribosomal subunit protein bS18 (Methylococcus capsulatus (strain ATCC 33009 / NCIMB 11132 / Bath)).